A 986-amino-acid chain; its full sequence is Replication factor C subunit 1 (986 aa).

Residues 1 to 95 (MQRGIDSFFK…ALSKLKRHVD (95 aa)) are disordered. Phosphoserine is present on residues serine 18, serine 28, serine 40, serine 41, serine 48, and serine 58. Threonine 60 is subject to Phosphothreonine. 2 positions are modified to phosphoserine: serine 62 and serine 63. Phosphothreonine is present on threonine 71. Residues serine 128, serine 137, serine 149, serine 154, serine 156, serine 164, and serine 194 each carry the phosphoserine modification. Residues 136–147 (ESIKEAAPEKKV) show a composition bias toward basic and acidic residues. Disordered stretches follow at residues 136 to 203 (ESIK…ERHE) and 317 to 388 (KQVK…NDVP). Residue threonine 197 is modified to Phosphothreonine. The BRCT domain maps to 232–322 (GSPDCLSGLT…SGIAKQVKEE (91 aa)). Basic and acidic residues-rich tracts occupy residues 317 to 364 (KQVK…EKHD) and 370 to 385 (VKEE…DKLN). 487–494 (GPPGIGKT) lines the ATP pocket. A disordered region spans residues 913-986 (SEAAGADDDY…ASKSKAKAKK (74 aa)). Residues 917–932 (GADDDYLDEGPGEEDG) show a composition bias toward acidic residues. Phosphoserine is present on residues serine 938 and serine 939. The short motif at 955 to 959 (KAKKR) is the Nuclear localization signal element. Low complexity predominate over residues 962 to 979 (TSKASGGSKKATSSTASK).

This sequence belongs to the activator 1 large subunit family. As to quaternary structure, interacts with C-terminus of PCNA.

The protein resides in the nucleus. In terms of biological role, the elongation of primed DNA templates by DNA polymerase delta and epsilon requires the action of the accessory proteins proliferating cell nuclear antigen (PCNA) and activator 1. This subunit binds to the primer-template junction. The sequence is that of Replication factor C subunit 1 (Gnf1) from Drosophila melanogaster (Fruit fly).